The primary structure comprises 344 residues: MLDVPVLLAAVSPDSPCGDDLEYDAAFLELERIAQGQPERQMGDAVLPAEPPEWPRVRALASELFGRSKDLRVANLLLQSNVALDGLDGLADGLLLVRELLGQYWDGVYPLLDADDDNDPTFRINALTGLVAEPLLQLVWAIPLVRSRAFGPVNLRAALNAAGLQRFASETLSPEQIAGAFADADADALAATRRALDGAQEHALAIESGVAERVGSAQGLDLGPLRQLLRQALQVFDLYGPQGAGESLAPGAEAVADEQVGAAPVAAVAAPAPRASGEIANREDVLRQLDRLLEYYVRHEPSSPVPVLLKRAKTLVTADFAEIVRNLIPDGISQFETLRGPESE.

As to quaternary structure, homododecamer. Interacts with TssB1 and TssC1. Interacts with TssK1 and TssF1.

Core component of the H1 type VI (H1-T6SS) secretion system that plays a role in the release of toxins targeting both eukaryotic and prokaryotic species. Forms a dodecameric ring-shaped structure located at one end of the T6SS sheath. May properly attach the pre-assembled sheath onto the baseplate and/or stabilize the sheaths tubular structure. The chain is Type VI secretion system component TssA1 from Pseudomonas aeruginosa (strain ATCC 15692 / DSM 22644 / CIP 104116 / JCM 14847 / LMG 12228 / 1C / PRS 101 / PAO1).